A 200-amino-acid chain; its full sequence is Small ribosomal subunit protein eS1 (200 aa).

This sequence belongs to the eukaryotic ribosomal protein eS1 family. Part of the 30S ribosomal subunit.

The sequence is that of Small ribosomal subunit protein eS1 from Thermococcus kodakarensis (strain ATCC BAA-918 / JCM 12380 / KOD1) (Pyrococcus kodakaraensis (strain KOD1)).